The chain runs to 409 residues: Tryptophan synthase beta chain (409 aa).

Lysine 104 carries the N6-(pyridoxal phosphate)lysine modification.

This sequence belongs to the TrpB family. Tetramer of two alpha and two beta chains. It depends on pyridoxal 5'-phosphate as a cofactor.

It catalyses the reaction (1S,2R)-1-C-(indol-3-yl)glycerol 3-phosphate + L-serine = D-glyceraldehyde 3-phosphate + L-tryptophan + H2O. It functions in the pathway amino-acid biosynthesis; L-tryptophan biosynthesis; L-tryptophan from chorismate: step 5/5. The beta subunit is responsible for the synthesis of L-tryptophan from indole and L-serine. This chain is Tryptophan synthase beta chain, found in Trichodesmium erythraeum (strain IMS101).